The following is a 372-amino-acid chain: Flagellar P-ring protein (372 aa).

The first 26 residues, 1–26 (MNLSSLPFRLLAAAVALCAIAAPASA), serve as a signal peptide directing secretion.

Belongs to the FlgI family. The basal body constitutes a major portion of the flagellar organelle and consists of four rings (L,P,S, and M) mounted on a central rod.

It localises to the periplasm. The protein resides in the bacterial flagellum basal body. Functionally, assembles around the rod to form the L-ring and probably protects the motor/basal body from shearing forces during rotation. The sequence is that of Flagellar P-ring protein from Xanthomonas axonopodis pv. citri (strain 306).